Reading from the N-terminus, the 262-residue chain is MRRTLYRLMIELTNGRFTSYILRKFAQSRLSSIIIPSYAKVFQINQDEMEKGLKEYRTLHELFTRKLKEGKRSIDTDASSIVSPVDGVFADHGPIEETKTFDIKGKRYSIVDMLGNEERAQRYAGGTYMVIYLSPSHYHRIHSPLSGSVTERFVLGRKSYPVNAAGMEYGKEPLSKNYRSVTEVNSDGEHMALVKVGAMFVNSIELLHERDTVQKGEEMAYFTFGSTVVLLFEKDMIEVVQELKSGQELRLGEKIATRLAHK.

Residues Asp-86, His-142, and Ser-226 each act as charge relay system; for autoendoproteolytic cleavage activity in the active site. Catalysis depends on Ser-226, which acts as the Schiff-base intermediate with substrate; via pyruvic acid; for decarboxylase activity. Residue Ser-226 is modified to Pyruvic acid (Ser); by autocatalysis.

It belongs to the phosphatidylserine decarboxylase family. PSD-B subfamily. Prokaryotic type I sub-subfamily. Heterodimer of a large membrane-associated beta subunit and a small pyruvoyl-containing alpha subunit. It depends on pyruvate as a cofactor. In terms of processing, is synthesized initially as an inactive proenzyme. Formation of the active enzyme involves a self-maturation process in which the active site pyruvoyl group is generated from an internal serine residue via an autocatalytic post-translational modification. Two non-identical subunits are generated from the proenzyme in this reaction, and the pyruvate is formed at the N-terminus of the alpha chain, which is derived from the carboxyl end of the proenzyme. The autoendoproteolytic cleavage occurs by a canonical serine protease mechanism, in which the side chain hydroxyl group of the serine supplies its oxygen atom to form the C-terminus of the beta chain, while the remainder of the serine residue undergoes an oxidative deamination to produce ammonia and the pyruvoyl prosthetic group on the alpha chain. During this reaction, the Ser that is part of the protease active site of the proenzyme becomes the pyruvoyl prosthetic group, which constitutes an essential element of the active site of the mature decarboxylase.

The protein resides in the cell membrane. The enzyme catalyses a 1,2-diacyl-sn-glycero-3-phospho-L-serine + H(+) = a 1,2-diacyl-sn-glycero-3-phosphoethanolamine + CO2. It participates in phospholipid metabolism; phosphatidylethanolamine biosynthesis; phosphatidylethanolamine from CDP-diacylglycerol: step 2/2. Functionally, catalyzes the formation of phosphatidylethanolamine (PtdEtn) from phosphatidylserine (PtdSer). In Bacillus cereus (strain ATCC 10987 / NRS 248), this protein is Phosphatidylserine decarboxylase proenzyme.